The following is a 198-amino-acid chain: MQSGTRWRVLGLCLLSIGVWGQDGNEEMGSITQTPYQVSISGTTVILTCSQHLGSEAQWQHNGKNKEDSGDRLFLPEFSEMEQSGYYVCYPRGSNPEDASHHLYLKARVCENCMEMDVMAVATIVIVDICITLGLLLLVYYWSKNRKAKAKPVTRGAGAGGRQRGQNKERPPPVPNPDYEPIRKGQQDLYSGLNQRRI.

A signal peptide spans 1-21; it reads MQSGTRWRVLGLCLLSIGVWG. Topologically, residues 22–117 are extracellular; it reads QDGNEEMGSI…RVCENCMEMD (96 aa). The region spanning 37-107 is the Ig-like domain; the sequence is QVSISGTTVI…DASHHLYLKA (71 aa). A disulfide bridge links cysteine 49 with cysteine 89. The helical transmembrane segment at 118–138 threads the bilayer; that stretch reads VMAVATIVIVDICITLGLLLL. Residues 139–198 lie on the Cytoplasmic side of the membrane; the sequence is VYYWSKNRKAKAKPVTRGAGAGGRQRGQNKERPPPVPNPDYEPIRKGQQDLYSGLNQRRI. Residues 152 to 198 form a disordered region; it reads PVTRGAGAGGRQRGQNKERPPPVPNPDYEPIRKGQQDLYSGLNQRRI. An NUMB-binding region region spans residues 166-183; the sequence is QNKERPPPVPNPDYEPIR. Residues 169 to 196 form the ITAM domain; that stretch reads ERPPPVPNPDYEPIRKGQQDLYSGLNQR. Residues 170–177 are proline-rich sequence; it reads RPPPVPNP. Phosphotyrosine occurs at positions 179 and 190. Residues 188-198 are compositionally biased toward polar residues; it reads DLYSGLNQRRI.

The TCR-CD3 complex is composed of a CD3D/CD3E and a CD3G/CD3E heterodimers that preferentially associate with TCRalpha and TCRbeta, respectively, to form TCRalpha/CD3E/CD3G and TCRbeta/CD3G/CD3E trimers. In turn, the hexamer interacts with CD3Z homodimer to form the TCR-CD3 complex. Alternatively, TCRalpha and TCRbeta can be replaced by TCRgamma and TCRdelta. Interacts with CD6. Interacts (via Proline-rich sequence) with NCK1; the interaction is ligand dependent but independent of tyrosine kinase activation. Post-translationally, phosphorylated on Tyr residues after T-cell receptor triggering by LCK in association with CD4/CD8.

The protein resides in the cell membrane. Functionally, part of the TCR-CD3 complex present on T-lymphocyte cell surface that plays an essential role in adaptive immune response. When antigen presenting cells (APCs) activate T-cell receptor (TCR), TCR-mediated signals are transmitted across the cell membrane by the CD3 chains CD3D, CD3E, CD3G and CD3Z. All CD3 chains contain immunoreceptor tyrosine-based activation motifs (ITAMs) in their cytoplasmic domain. Upon TCR engagement, these motifs become phosphorylated by Src family protein tyrosine kinases LCK and FYN, resulting in the activation of downstream signaling pathways. In addition of this role of signal transduction in T-cell activation, CD3E plays an essential role in correct T-cell development. Also participates in internalization and cell surface down-regulation of TCR-CD3 complexes via endocytosis sequences present in CD3E cytosolic region. In addition to its role as a TCR coreceptor, it serves as a receptor for ITPRIPL1. Ligand recognition inhibits T-cell activation by promoting interaction with NCK1, which prevents CD3E-ZAP70 interaction and blocks the ERK-NFkB signaling cascade and calcium influx. In Macaca fascicularis (Crab-eating macaque), this protein is T-cell surface glycoprotein CD3 epsilon chain (CD3E).